A 357-amino-acid chain; its full sequence is Chorismate synthase (357 aa).

NADP(+) is bound by residues Arg-48 and Arg-54. FMN-binding positions include Arg-125–Ser-127, Asn-238–Ala-239, Gly-278, Lys-293–Ser-297, and Arg-319.

Belongs to the chorismate synthase family. Homotetramer. FMNH2 serves as cofactor.

The enzyme catalyses 5-O-(1-carboxyvinyl)-3-phosphoshikimate = chorismate + phosphate. It participates in metabolic intermediate biosynthesis; chorismate biosynthesis; chorismate from D-erythrose 4-phosphate and phosphoenolpyruvate: step 7/7. Functionally, catalyzes the anti-1,4-elimination of the C-3 phosphate and the C-6 proR hydrogen from 5-enolpyruvylshikimate-3-phosphate (EPSP) to yield chorismate, which is the branch point compound that serves as the starting substrate for the three terminal pathways of aromatic amino acid biosynthesis. This reaction introduces a second double bond into the aromatic ring system. The polypeptide is Chorismate synthase (Blochmanniella floridana).